The sequence spans 202 residues: ATP-dependent Clp protease proteolytic subunit (202 aa).

S106 acts as the Nucleophile in catalysis. The active site involves H131.

It belongs to the peptidase S14 family. In terms of assembly, fourteen ClpP subunits assemble into 2 heptameric rings which stack back to back to give a disk-like structure with a central cavity, resembling the structure of eukaryotic proteasomes.

The protein resides in the cytoplasm. It catalyses the reaction Hydrolysis of proteins to small peptides in the presence of ATP and magnesium. alpha-casein is the usual test substrate. In the absence of ATP, only oligopeptides shorter than five residues are hydrolyzed (such as succinyl-Leu-Tyr-|-NHMec, and Leu-Tyr-Leu-|-Tyr-Trp, in which cleavage of the -Tyr-|-Leu- and -Tyr-|-Trp bonds also occurs).. In terms of biological role, cleaves peptides in various proteins in a process that requires ATP hydrolysis. Has a chymotrypsin-like activity. Plays a major role in the degradation of misfolded proteins. The chain is ATP-dependent Clp protease proteolytic subunit from Methylibium petroleiphilum (strain ATCC BAA-1232 / LMG 22953 / PM1).